A 1135-amino-acid polypeptide reads, in one-letter code: MFELNNFDALQIGLASPEKIREWSRGEVKKPETINYRTLKPERDGLFCERIFGPTKDWECHCGKYKRVRYKGIVCDRCGVEVTKSKVRRERMGHIELAAPVSHIWYFKGIPSRMGLMLDMSPRSLEKVLYFASYIVIDPKETPLLKKQLLNEKEYREAIENYGEEGFVAGMGAESVQKLLEEIDLNQVSKELKEALKTSTGQKKIRLIRRLEAVESFRKSSNRPDWMIIDVIPVIPPDLRPMVQLDGGRFATSDLNDLYRRVINRNNRLKKLLDLGAPDIIVRNEKRMLQEAVDALIDNGRRGRPVTGPGNRPLKSLSDMLKGKQGRFRQNLLGKRVDYSGRSVIVVGPELKMYQCGLPKEMALELFKPFVMKKLVQGGLSHNIKSAKRMVERVQSEVWDVLEEVISDHPVLLNRAPTLHRLGIQAFQPVLVEGRAIKLHPLVCTAYNADFDGDQMAVHLPLSVEAQAEARFLMLAAHNILKPSDGKPVCVPTQDMVLGSYYLTLDKENAIGEGRIFSSPEEAIMAYQIGDIDIHAHIKVRISKEVDGEEVCGIIDCTPGKLIFNESIPQDLGFVDRSVPGNEVKLEVDFLINKSSLGKLINKCYMKHGPTKTSIMLDKIKEKGYHYSTIGAITVSTSDMVVPEAKKRLLAETDVEVNKIDKMYRRGFISEDERYERVIEKWTKTTDLVADELMKNLDRFNPIFMMADSGARGSKSQIKQLAGMRGLMANPSGKIIELPIRASFREGLDVSEYFISTHGARKGNADTALKTADSGYLTRRLVDVSQDVIVREEDCGSKEGFEISEIREGNEIIEPLSERLTGRYSAEDIIDPNTGEILVKKEEYIDGEKAEEVEKSGVKKIKIRSVFTCKSKHGVCAKCYGMNMATAEKINIGESVGIIAAQSIGEPGTQLTMRTFHTGGVAGSDITQGLPRVEELFEARKPKGLAIVSEINGTIRIDETKKKRTVVVIGETEEISYDIPFGSRLKVSNGDVISAGDEITEGSVNPHDVLRIKGPNGVKNYLLSEVQKVYRLQGVDINDKHLEVVVRQMTRKIKIEESGDTEFLPGTMVDIFDFQEENAKAEEEGKETAKGRITLLGITKAALATDSFLSSASFQETTRVLTDAAIKGKVDPLLG.

Residues cysteine 60, cysteine 62, cysteine 75, and cysteine 78 each contribute to the Zn(2+) site. Positions 450, 452, and 454 each coordinate Mg(2+). Zn(2+) is bound by residues cysteine 795, cysteine 869, cysteine 876, and cysteine 879.

The protein belongs to the RNA polymerase beta' chain family. In terms of assembly, the RNAP catalytic core consists of 2 alpha, 1 beta, 1 beta' and 1 omega subunit. When a sigma factor is associated with the core the holoenzyme is formed, which can initiate transcription. The cofactor is Mg(2+). Requires Zn(2+) as cofactor.

The catalysed reaction is RNA(n) + a ribonucleoside 5'-triphosphate = RNA(n+1) + diphosphate. Its function is as follows. DNA-dependent RNA polymerase catalyzes the transcription of DNA into RNA using the four ribonucleoside triphosphates as substrates. The polypeptide is DNA-directed RNA polymerase subunit beta' (Clostridium tetani (strain Massachusetts / E88)).